A 317-amino-acid polypeptide reads, in one-letter code: Melanocyte-stimulating hormone receptor (317 aa).

Topologically, residues 1–37 (MPAQGSQRGLLGAVNFTPTATPHLRPAANQTGPQCLE) are extracellular. Asparagine 29 is a glycosylation site (N-linked (GlcNAc...) asparagine). The chain crosses the membrane as a helical span at residues 38 to 63 (VSVPDGLFLCLGLVSLVENTLVVAAI). The Cytoplasmic portion of the chain corresponds to 64-72 (AKNRNLHSP). Residues 73–93 (MYCFICCLALSDLLVSVSNLL) form a helical membrane-spanning segment. Over 94-118 (ETAVLLLLEVGALAAQATVVQQLGN) the chain is Extracellular. A helical transmembrane segment spans residues 119 to 140 (VIDVLICSSMVSSLCSLGAIAM). Over 141–163 (DRYISIFYALRYHSIVTLARARR) the chain is Cytoplasmic. The helical transmembrane segment at 164-183 (AIAAVWAASILSSTLFITYY) threads the bilayer. Residues 184–191 (DRTAALLC) lie on the Extracellular side of the membrane. A helical membrane pass occupies residues 192–211 (LVVFFLAMLVLMALLYVHML). The Cytoplasmic segment spans residues 212-240 (IQACQHAQAIARLHKRQHPVQQGWGLKGA). Residues 241–266 (ATLTILLGVFFLCWGPFFLHLTLIAV) form a helical membrane-spanning segment. At 267–279 (CPQHPTCSCIFKN) the chain is on the extracellular side. The chain crosses the membrane as a helical span at residues 280 to 300 (FRLFLALIICNTIVDPLIYAF). Topologically, residues 301-317 (RSQELRRTLKEVLLFSW) are cytoplasmic.

Belongs to the G-protein coupled receptor 1 family. As to quaternary structure, interacts with MGRN1, but does not undergo MGRN1-mediated ubiquitination; this interaction competes with GNAS-binding and thus inhibits agonist-induced cAMP production. Interacts with OPN3; the interaction results in a decrease in MC1R-mediated cAMP signaling and ultimately a decrease in melanin production in melanocytes.

Its subcellular location is the cell membrane. Its function is as follows. Receptor for MSH (alpha, beta and gamma) and ACTH. The activity of this receptor is mediated by G proteins which activate adenylate cyclase. Mediates melanogenesis, the production of eumelanin (black/brown) and phaeomelanin (red/yellow), via regulation of cAMP signaling in melanocytes. The chain is Melanocyte-stimulating hormone receptor (MC1R) from Eulemur fulvus fulvus (Brown lemur).